The following is an 803-amino-acid chain: Urocanate reductase (803 aa).

Residue S258 is modified to FMN phosphoryl serine. Residues A311, E330, N338, T339, G343, G344, and D573 each coordinate FAD. R632 serves as the catalytic Proton donor. 4 residues coordinate FAD: H739, E768, A783, and L784.

Belongs to the FAD-dependent oxidoreductase 2 family. FRD/SDH subfamily. Requires FAD as cofactor. FMN serves as cofactor.

The enzyme catalyses dihydrourocanate + A = urocanate + AH2. Catalyzes the two-electron reduction of urocanate to dihydrourocanate (also named imidazole propionate or deamino-histidine). Dihydrourocanate is present at higher concentrations in subjects with type 2 diabetes, and directly impairs glucose tolerance and insulin signaling at the level of insulin receptor substrate (IRS) through activation of p38 gamma (MAPK12)-p62-mTORC1. Therefore, the UrdA enzyme from the gut bacteria S.mutans strain UA159 may contribute to the pathogenesis of type 2 diabetes by producing the microbial metabolite dihydrourocanate. The protein is Urocanate reductase of Streptococcus mutans serotype c (strain ATCC 700610 / UA159).